Reading from the N-terminus, the 481-residue chain is MRILQRALTFEDVLMVPRKSSVLPKDVSLKSRLTKNIRLNIPFISAAMDTVTEHKTAIAMARLGGIGIVHKNMDIQTQVKEITKVKKSESGVINDPIFIHAHRTLADAKVITDNYKISGVPVVDDKGLLIGILTNRDVRFETDLSKKVGDVMTKMPLVTAHVGISLDEASDLMHKHKIEKLPIVDKDNVLKGLITIKDIQKRIEYPEANKDDFGRLRVGAAIGVGQLDRAEMLVKAGVDALVLDSAHGHSANILHTLEEIKKSLVVDVIVGNVVTKEATSDLISAGADAIKVGIGPGSICTTRIVAGVGMPQVSAIDNCVEVASKFDIPVIADGGIRYSGDVAKALALGASSVMIGSLLAGTEESPGDFMIYQGRQYKSYRGMGSIGAMTKGSSDRYFQEGVASEKLVPEGIEGRVPYRGKVSDMIFQLVGGVRSSMGYQGAKNILELYQNAEFVEITSAGLKESHVHGVDITKEAPNYYG.

CBS domains are found at residues 92–148 and 152–209; these read VIND…SKKV and MTKM…PEAN. Residues aspartate 244 and 293 to 295 contribute to the NAD(+) site; that span reads GIG. Residues glycine 295 and glycine 297 each coordinate K(+). Serine 298 is an IMP binding site. Cysteine 300 lines the K(+) pocket. Residue cysteine 300 is the Thioimidate intermediate of the active site. IMP-binding positions include 333–335, 356–357, and 380–384; these read DGG, GS, and YRGMG. Arginine 396 functions as the Proton acceptor in the catalytic mechanism. Position 410 (glutamate 410) interacts with IMP. K(+) is bound by residues glutamate 464, serine 465, and histidine 466.

This sequence belongs to the IMPDH/GMPR family. Homotetramer. K(+) is required as a cofactor.

It catalyses the reaction IMP + NAD(+) + H2O = XMP + NADH + H(+). Its pathway is purine metabolism; XMP biosynthesis via de novo pathway; XMP from IMP: step 1/1. With respect to regulation, mycophenolic acid (MPA) is a non-competitive inhibitor that prevents formation of the closed enzyme conformation by binding to the same site as the amobile flap. In contrast, mizoribine monophosphate (MZP) is a competitive inhibitor that induces the closed conformation. MPA is a potent inhibitor of mammalian IMPDHs but a poor inhibitor of the bacterial enzymes. MZP is a more potent inhibitor of bacterial IMPDH. Catalyzes the conversion of inosine 5'-phosphate (IMP) to xanthosine 5'-phosphate (XMP), the first committed and rate-limiting step in the de novo synthesis of guanine nucleotides, and therefore plays an important role in the regulation of cell growth. This Helicobacter pylori (strain ATCC 700392 / 26695) (Campylobacter pylori) protein is Inosine-5'-monophosphate dehydrogenase.